A 704-amino-acid chain; its full sequence is Capsule polysaccharide modification protein LipA (704 aa).

Its subcellular location is the cell inner membrane. Involved in the phospholipid modification of the capsular polysaccharide, a strong requirement for its translocation to the cell surface. The chain is Capsule polysaccharide modification protein LipA (lipA) from Neisseria meningitidis serogroup B (strain ATCC BAA-335 / MC58).